A 603-amino-acid polypeptide reads, in one-letter code: DNA mismatch repair protein MutL (603 aa).

Belongs to the DNA mismatch repair MutL/HexB family.

Its function is as follows. This protein is involved in the repair of mismatches in DNA. It is required for dam-dependent methyl-directed DNA mismatch repair. May act as a 'molecular matchmaker', a protein that promotes the formation of a stable complex between two or more DNA-binding proteins in an ATP-dependent manner without itself being part of a final effector complex. In Listeria monocytogenes serotype 4a (strain HCC23), this protein is DNA mismatch repair protein MutL.